A 112-amino-acid chain; its full sequence is Protein Churchill (112 aa).

Positions 2, 5, 30, 33, 59, 61, 64, 66, 71, 88, and 91 each coordinate Zn(2+).

This sequence belongs to the Churchill family.

In terms of biological role, transcriptional activator that mediates FGF signaling during neural development. Plays a role in the regulation of cell movement. Does not bind DNA by itself. In Xenopus laevis (African clawed frog), this protein is Protein Churchill (churc1).